The sequence spans 437 residues: GTPase Der (437 aa).

EngA-type G domains follow at residues 4–167 and 175–352; these read PIVA…PDNA and IHFS…QHHR. Residues 10–17, 57–61, 119–122, 181–188, 229–233, and 294–297 each bind GTP; these read GRPNVGKS, DTGGI, NKVD, DTAGI, and NKWD. Residues 353–437 form the KH-like domain; that stretch reads QRIQSAVLND…PIHLIKRQRQ (85 aa).

This sequence belongs to the TRAFAC class TrmE-Era-EngA-EngB-Septin-like GTPase superfamily. EngA (Der) GTPase family. In terms of assembly, associates with the 50S ribosomal subunit.

Its function is as follows. GTPase that plays an essential role in the late steps of ribosome biogenesis. This Limosilactobacillus reuteri (strain DSM 20016) (Lactobacillus reuteri) protein is GTPase Der.